Reading from the N-terminus, the 73-residue chain is Large ribosomal subunit protein bL31 (73 aa).

Positions 16, 18, 37, and 40 each coordinate Zn(2+).

It belongs to the bacterial ribosomal protein bL31 family. Type A subfamily. Part of the 50S ribosomal subunit. Requires Zn(2+) as cofactor.

Binds the 23S rRNA. This chain is Large ribosomal subunit protein bL31, found in Pseudomonas fluorescens (strain ATCC BAA-477 / NRRL B-23932 / Pf-5).